Reading from the N-terminus, the 264-residue chain is S-adenosylmethionine decarboxylase proenzyme (264 aa).

The active-site Schiff-base intermediate with substrate; via pyruvic acid is Ser113. Ser113 carries the post-translational modification Pyruvic acid (Ser); by autocatalysis. His118 acts as the Proton acceptor; for processing activity in catalysis. The active-site Proton donor; for catalytic activity is Cys141.

This sequence belongs to the prokaryotic AdoMetDC family. Type 2 subfamily. In terms of assembly, heterooctamer of four alpha and four beta chains arranged as a tetramer of alpha/beta heterodimers. It depends on pyruvate as a cofactor. Is synthesized initially as an inactive proenzyme. Formation of the active enzyme involves a self-maturation process in which the active site pyruvoyl group is generated from an internal serine residue via an autocatalytic post-translational modification. Two non-identical subunits are generated from the proenzyme in this reaction, and the pyruvate is formed at the N-terminus of the alpha chain, which is derived from the carboxyl end of the proenzyme. The post-translation cleavage follows an unusual pathway, termed non-hydrolytic serinolysis, in which the side chain hydroxyl group of the serine supplies its oxygen atom to form the C-terminus of the beta chain, while the remainder of the serine residue undergoes an oxidative deamination to produce ammonia and the pyruvoyl group blocking the N-terminus of the alpha chain.

It carries out the reaction S-adenosyl-L-methionine + H(+) = S-adenosyl 3-(methylsulfanyl)propylamine + CO2. It functions in the pathway amine and polyamine biosynthesis; S-adenosylmethioninamine biosynthesis; S-adenosylmethioninamine from S-adenosyl-L-methionine: step 1/1. Its function is as follows. Catalyzes the decarboxylation of S-adenosylmethionine to S-adenosylmethioninamine (dcAdoMet), the propylamine donor required for the synthesis of the polyamines spermine and spermidine from the diamine putrescine. This is S-adenosylmethionine decarboxylase proenzyme from Azotobacter vinelandii (strain DJ / ATCC BAA-1303).